A 383-amino-acid chain; its full sequence is MGEDDPKGRQRLKLLLVAARHHLSGPDLRSVVHYLERDDVGFQVTLQLADPSQQPELLELHRLVITPALIKLSPAPKQVFAGSNILQQLKGWVPRWQQDGVVSGLGLSLRPTELDGSRTQKELQLEDQLLVLRQENETLIDRIHAQERLLRMVAHELRTPLTAAALALQSQRLGQIDMTRFQDVITRRLEEMEALSKDLLEVGTTRWETLFNPQRLDLASVSAEVILELEKLWLGRNVEIRTDIPSDLPKVFADQRRMRQVLLNLLENALKYTGNGGHITLTMLHRTSQRVEVSVCDSGPGIPTEEQQRIFLDRVRLPQTSDRTTGFGVGLSVCRRIVEVHGGRIWVVSEPGEGACFTFTVPIWQGQGQEWGQAVLTEGELEP.

A Histidine kinase domain is found at 152–365 (MVAHELRTPL…CFTFTVPIWQ (214 aa)). Histidine 155 bears the Phosphohistidine; by autocatalysis mark.

In terms of assembly, homooligomerizes. Interacts with KaiC. Participates in the KaiABC clock complex, whose core is composed of a KaiC homohexamer, 6 KaiB and up to 6 KaiA dimers. SasA and KaiB(fs) compete to bind to KaiC.

It carries out the reaction ATP + protein L-histidine = ADP + protein N-phospho-L-histidine.. Member of the two-component regulatory system SasA/RpaA involved in genome-wide circadian gene expression. One of several clock output pathways. Participates in the Kai clock protein complex, the main circadian regulator in cyanobacteria, via its interaction with KaiC. KaiC enhances the autophosphorylation activity of SasA, which then transfers its phosphate group to RpaA to activate it. In addition to its output function, recruits fold-shifted KaiB (KaiB(fs)) to KaiC to cooperatively form the KaiB(6):KaiC(6) complex (independent of SasA kinase activity). Required for robustness of the circadian rhythm of gene expression and is involved in clock output, also required for adaptation to light/dark cycles. The sequence is that of Adaptive-response sensory kinase SasA from Parasynechococcus marenigrum (strain WH8102).